Reading from the N-terminus, the 1675-residue chain is MAQILPIRFQEHLQLQNLGINPANIGFSTLTMESDKFICIREKVGEQAQVVIIDMNDPSNPIRRPISADSAIMNPASKVIALKAGKTLQIFNIEMKSKMKAHTMTDDVTFWKWISLNTVALVTDNAVYHWSMEGESQPVKMFDRHSSLAGCQIINYRTDAKQKWLLLTGISAQQNRVVGAMQLYSVDRKVSQPIEGHAASFAQFKMEGNAEESTLFCFAVRGQAGGKLHIIEVGTPPTGNQPFPKKAVDVFFPPEAQNDFPVAMQISEKHDVVFLITKYGYIHLYDLETGTCIYMNRISGETIFVTAPHEATAGIIGVNRKGQVLSVCVEEENIIPYITNVLQNPDLALRMAVRNNLAGAEELFARKFNALFAQGNYSEAAKVAANAPKGILRTPDTIRRFQSVPAQPGQTSPLLQYFGILLDQGQLNKYESLELCRPVLQQGRKQLLEKWLKEDKLECSEELGDLVKSVDPTLALSVYLRANVPNKVIQCFAETGQVQKIVLYAKKVGYTPDWIFLLRNVMRISPDQGQQFAQMLVQDEEPLADITQIVDVFMEYNLIQQCTAFLLDALKNNRPSEGPLQTRLLEMNLMHAPQVADAILGNQMFTHYDRAHIAQLCEKAGLLQRALEHFTDLYDIKRAVVHTHLLNPEWLVNYFGSLSVEDSLECLRAMLSANIRQNLQIWVQVASKYHEQLSTQSLIELFESFKSFEGLFYFLGSIVNFSQDPDVHFKYIQAACKTGQIKEVERICRESNCYDPERVKNFLKEAKLTDQLPLIIVCDRFDFVHDLVLYLYRNSLQKYIEIYVQKVNPSRLPVVIGGLLDVDCSEDVIKNLILVVRGQFSTDELVAEVEKRNRLKLLLPWLEARIHEGCEEPATHNALAKIYIDSNNNPERFLRENPYYDSRVVGKYCEKRDPHLACVAYERGQCDLELINVCNENSLFKSLSRYLVRRKDPELWGSVLLESNPYRRPLIDQVVQTALSETQDPEEVSVTVKAFMTADLPNELIELLEKIVLDNSVFSEHRNLQNLLILTAIKADRTRVMEYINRLDNYDAPDIANIAISNELFEEAFAIFRKFDVNTSAVQVLIEHIGNLDRAYEFAERCNEPAVWSQLAKAQLQKGMVKEAIDSYIKADDPSSYMEVVQAANTSGNWEELVKYLQMARKKARESYVETELIFALAKTNRLAELEEFINGPNNAHIQQVGDRCYDEKMYDAAKLLYNNVSNFGRLASTLVHLGEYQAAVDGARKANSTRTWKEVCFACVDGKEFRLAQMCGLHIVVHADELEELINYYQDRGYFEELITMLEAALGLERAHMGMFTELAILYSKFKPQKMREHLELFWSRVNIPKVLRAAEQAHLWAELVFLYDKYEEYDNAIITMMNHPTDAWKEGQFKDIITKVANVELYYKAIQFYLEFKPLLLNDLLMVLSPRLAHTRAVNYFSKVKQLPLVKPYLRSVQNHNNKSVNESLNNLFITEEDYQALRTSIDAYDNFDNISLAQRLEKHELIEFRRIAAYLFKGNNRWKQSVELCKKDSLYKDAMQYASESKDTELAEELLQWFLQEEKRECFGACLFTCYDLLRPDVVLETAWRHNIMDFAMPYFIQVMKEYLTKVDKLDASESLRKEEEQATETQPIVYGQPQLMLTAGPSVAVPPQAPFGYGYTAPPYGQPQPGFGYSM.

The residue at position 2 (A2) is an N-acetylalanine. Residues A2 to Y479 form a globular terminal domain region. WD40-like repeat regions lie at residues N24–S67, A68–D107, V108–A149, G150–E195, G196–Q257, N258–E301, and T302–E330. At S67 the chain carries Phosphoserine. T105 is modified (phosphothreonine). At Y184 the chain carries Phosphotyrosine. Phosphothreonine is present on T394. The binding site for the uncoating ATPase, involved in lattice disassembly stretch occupies residues E449 to D465. A flexible linker region spans residues L480–R523. Residues I524 to Y634 form a distal segment region. Positions I524–M1675 are heavy chain arm. 7 CHCR repeats span residues V537–V683, A686–V828, I833–D972, L979–A1124, Y1128–A1269, L1274–N1420, and L1423–F1566. Y634 carries the post-translational modification Phosphotyrosine. A proximal segment region spans residues A639 to M1675. The residue at position 737 (K737) is an N6-succinyllysine. K856 is modified (N6-acetyllysine). Y899 is subject to Phosphotyrosine. At S1167 the chain carries Phosphoserine. The residue at position 1206 (Y1206) is a Phosphotyrosine. The tract at residues A1213 to K1522 is involved in binding clathrin light chain. Residue S1229 is modified to Phosphoserine. An N6-acetyllysine; alternate modification is found at K1441. K1441 carries the N6-succinyllysine; alternate modification. Phosphotyrosine is present on residues Y1477 and Y1487. At S1494 the chain carries Phosphoserine. K1501 is subject to N6-acetyllysine. The interval A1550 to M1675 is trimerization.

The protein belongs to the clathrin heavy chain family. In terms of assembly, clathrin triskelions, composed of 3 heavy chains and 3 light chains, are the basic subunits of the clathrin coat. In the presence of light chains, hub assembly is influenced by both the pH and the concentration of calcium. Interacts with HIP1. Interacts with DENND1A, DENND1B and DENND1C. Interacts with OCRL. Interacts with ERBB2. Interacts with FKBP6. Interacts with CKAP5 and TACC3 forming the TACC3/ch-TOG/clathrin complex located at spindle inter-microtubules bridges; the complex implicates clathrin triskelions; TACC3 and CLTC are proposed to form a composite microtubule interaction surface. Interacts with ATG16L1 (via N-terminus). Interacts with RFTN1; the interaction occurs in response to pathogens. Interacts with USP2 isoform 2. Interacts with TMEM106B (via N-terminus). Interacts with DNAJC6; this interaction produces a local change in heavy-chain contacts, creating a detectable global distortion of the clathrin coat and leads to the recruitment of HSPA8.

The protein resides in the cytoplasmic vesicle membrane. It localises to the membrane. The protein localises to the coated pit. Its subcellular location is the melanosome. It is found in the cytoplasm. The protein resides in the cytoskeleton. It localises to the spindle. In terms of biological role, clathrin is the major protein of the polyhedral coat of coated pits and vesicles. Two different adapter protein complexes link the clathrin lattice either to the plasma membrane or to the trans-Golgi network. Acts as a component of the TACC3/ch-TOG/clathrin complex proposed to contribute to stabilization of kinetochore fibers of the mitotic spindle by acting as inter-microtubule bridge. The TACC3/ch-TOG/clathrin complex is required for the maintenance of kinetochore fiber tension. Plays a role in early autophagosome formation. Interaction with DNAJC6 mediates the recruitment of HSPA8 to the clathrin lattice and creates local destabilization of the lattice promoting uncoating. The sequence is that of Clathrin heavy chain 1 from Rattus norvegicus (Rat).